Consider the following 148-residue polypeptide: Thiol-disulfide oxidoreductase YkuV (148 aa).

Positions 2 to 145 constitute a Thioredoxin domain; sequence KLRQPMPELT…LEKRVNRVLA (144 aa). Cysteine 41 and cysteine 44 are oxidised to a cystine.

Monomer.

The protein resides in the cytoplasm. Its function is as follows. Participates in various redox reactions through the reversible oxidation of its active center dithiol to a disulfide and catalyzes dithiol-disulfide exchange reactions. In Bacillus subtilis (strain 168), this protein is Thiol-disulfide oxidoreductase YkuV (ykuV).